Consider the following 351-residue polypeptide: Uroporphyrinogen decarboxylase (351 aa).

Substrate-binding positions include 25–29, D74, Y151, S206, and H325; that span reads RQAGR.

The protein belongs to the uroporphyrinogen decarboxylase family. Homodimer.

It localises to the cytoplasm. It carries out the reaction uroporphyrinogen III + 4 H(+) = coproporphyrinogen III + 4 CO2. The protein operates within porphyrin-containing compound metabolism; protoporphyrin-IX biosynthesis; coproporphyrinogen-III from 5-aminolevulinate: step 4/4. In terms of biological role, catalyzes the decarboxylation of four acetate groups of uroporphyrinogen-III to yield coproporphyrinogen-III. The protein is Uroporphyrinogen decarboxylase of Prosthecochloris aestuarii (strain DSM 271 / SK 413).